We begin with the raw amino-acid sequence, 280 residues long: 4-diphosphocytidyl-2-C-methyl-D-erythritol kinase (280 aa).

Lys9 is an active-site residue. Position 92–102 (92–102 (PMGGGLGGGSS)) interacts with ATP. Asp134 is an active-site residue.

Belongs to the GHMP kinase family. IspE subfamily.

The enzyme catalyses 4-CDP-2-C-methyl-D-erythritol + ATP = 4-CDP-2-C-methyl-D-erythritol 2-phosphate + ADP + H(+). The protein operates within isoprenoid biosynthesis; isopentenyl diphosphate biosynthesis via DXP pathway; isopentenyl diphosphate from 1-deoxy-D-xylulose 5-phosphate: step 3/6. Functionally, catalyzes the phosphorylation of the position 2 hydroxy group of 4-diphosphocytidyl-2C-methyl-D-erythritol. The polypeptide is 4-diphosphocytidyl-2-C-methyl-D-erythritol kinase (Nitrosococcus oceani (strain ATCC 19707 / BCRC 17464 / JCM 30415 / NCIMB 11848 / C-107)).